Consider the following 207-residue polypeptide: Small ribosomal subunit protein uS4 (207 aa).

The segment at 35–54 is disordered; it reads RPKPPGPQLGRPRRLSDRGQ. One can recognise an S4 RNA-binding domain in the interval 97–163; sequence RRLDNVLFRL…AYFKTLAENI (67 aa).

The protein belongs to the universal ribosomal protein uS4 family. In terms of assembly, part of the 30S ribosomal subunit. Contacts protein S5. The interaction surface between S4 and S5 is involved in control of translational fidelity.

In terms of biological role, one of the primary rRNA binding proteins, it binds directly to 16S rRNA where it nucleates assembly of the body of the 30S subunit. Its function is as follows. With S5 and S12 plays an important role in translational accuracy. The sequence is that of Small ribosomal subunit protein uS4 from Dehalococcoides mccartyi (strain CBDB1).